Consider the following 400-residue polypeptide: Probable phospho-2-dehydro-3-deoxyheptonate aldolase (400 aa).

This sequence belongs to the class-II DAHP synthase family.

The enzyme catalyses D-erythrose 4-phosphate + phosphoenolpyruvate + H2O = 7-phospho-2-dehydro-3-deoxy-D-arabino-heptonate + phosphate. The protein operates within antibiotic biosynthesis; phenazine biosynthesis. In Pseudomonas fluorescens, this protein is Probable phospho-2-dehydro-3-deoxyheptonate aldolase (phzC).